The sequence spans 204 residues: Small ribosomal subunit protein uS4 (204 aa).

Residues 25 to 45 (AVPSRRAYPPGQHGQARKKRS) form a disordered region. Residues 92-152 (MRLDNIIFRL…NKENSRRLAE (61 aa)) enclose the S4 RNA-binding domain.

It belongs to the universal ribosomal protein uS4 family. In terms of assembly, part of the 30S ribosomal subunit. Contacts protein S5. The interaction surface between S4 and S5 is involved in control of translational fidelity.

In terms of biological role, one of the primary rRNA binding proteins, it binds directly to 16S rRNA where it nucleates assembly of the body of the 30S subunit. Functionally, with S5 and S12 plays an important role in translational accuracy. This Cyanothece sp. (strain PCC 7425 / ATCC 29141) protein is Small ribosomal subunit protein uS4.